Here is a 181-residue protein sequence, read N- to C-terminus: uncharacterized protein (181 aa).

The Nudix hydrolase domain maps to 35–175; sequence LRHRCVFVWA…ARLRAWRGAS (141 aa). A Nudix box motif is present at residues 72–94; sequence GGVVGAGESYDDAALREAEEELG. Mg(2+) contacts are provided by Glu-88 and Glu-92.

This sequence belongs to the Nudix hydrolase family. The cofactor is Mg(2+).

This is an uncharacterized protein from Streptomyces coelicolor (strain ATCC BAA-471 / A3(2) / M145).